The chain runs to 352 residues: Strictosidine synthase (352 aa).

The signal sequence occupies residues 1–31 (MANFSESKSMMAVFFMFFLLLLSSSSSSSSS). Asn95 and Asn187 each carry an N-linked (GlcNAc...) asparagine glycan.

This sequence belongs to the strictosidine synthase family. Monomer.

Its subcellular location is the vacuole. The enzyme catalyses 3alpha(S)-strictosidine + H2O = secologanin + tryptamine. It functions in the pathway alkaloid biosynthesis; 3alpha(S)-strictosidine biosynthesis; 3alpha(S)-strictosidine from secologanin and tryptamine: step 1/1. Its function is as follows. Catalyzes the stereospecific condensation of tryptamine with secologanin to form strictosidine, the key intermediate of indole alkaloid biosynthesis. This Catharanthus roseus (Madagascar periwinkle) protein is Strictosidine synthase (STR1).